The following is a 547-amino-acid chain: ATP synthase subunit beta, mitochondrial (547 aa).

The N-terminal 45 residues, 1 to 45 (MASRRLLSSFLRSSTRRSLRPSFSNPRPSFLTSYCSSPASILRRY), are a transit peptide targeting the mitochondrion. A compositionally biased stretch (low complexity) spans 52 to 62 (KEPAASKPAGT). Positions 52 to 74 (KEPAASKPAGTAGTGKGTITDEK) are disordered. An ATP-binding site is contributed by 226–233 (GGDWVGKT).

This sequence belongs to the ATPase alpha/beta chains family. In terms of assembly, F-type ATPases have 2 components, CF(1) - the catalytic core - and CF(0) - the membrane proton channel. CF(1) has five subunits: alpha(3), beta(3), gamma(1), delta(1), epsilon(1). CF(0) has three main subunits: a, b and c.

The protein localises to the mitochondrion. The protein resides in the mitochondrion inner membrane. The enzyme catalyses ATP + H2O + 4 H(+)(in) = ADP + phosphate + 5 H(+)(out). Mitochondrial membrane ATP synthase (F(1)F(0) ATP synthase or Complex V) produces ATP from ADP in the presence of a proton gradient across the membrane which is generated by electron transport complexes of the respiratory chain. F-type ATPases consist of two structural domains, F(1) - containing the extramembraneous catalytic core, and F(0) - containing the membrane proton channel, linked together by a central stalk and a peripheral stalk. During catalysis, ATP synthesis in the catalytic domain of F(1) is coupled via a rotary mechanism of the central stalk subunits to proton translocation. Subunits alpha and beta form the catalytic core in F(1). Rotation of the central stalk against the surrounding alpha(3)beta(3) subunits leads to hydrolysis of ATP in three separate catalytic sites on the beta subunits. The sequence is that of ATP synthase subunit beta, mitochondrial (ATPB) from Daucus carota (Wild carrot).